The primary structure comprises 308 residues: Putative hydrolase MT0526 (308 aa).

Positions 1-48 are disordered; the sequence is MMVSSHLGSPDQAGHVDLASPADPPPPDASASHSPVDMPAPVAAAGSD. The active-site Nucleophile is the Asp62. Residues Asp62, Asp64, and Asp237 each contribute to the Mg(2+) site. Residue Asp64 is the Proton donor of the active site.

Belongs to the HAD-like hydrolase superfamily. SerB family. The cofactor is Mg(2+).

The chain is Putative hydrolase MT0526 from Mycobacterium tuberculosis (strain CDC 1551 / Oshkosh).